The following is a 539-amino-acid chain: 2,3-dihydroxybenzoate-AMP ligase (539 aa).

ATP is bound at residue Gly191. Substrate contacts are provided by residues 234 to 235 (HN) and Ser240. 5 residues coordinate ATP: Gly307, Val329, Asp413, Arg428, and Lys519. Residue Lys519 coordinates substrate.

Belongs to the ATP-dependent AMP-binding enzyme family.

Its subcellular location is the cytoplasm. The enzyme catalyses 2,3-dihydroxybenzoate + holo-[ACP] + ATP = 2,3-dihydroxybenzoyl-[ACP] + AMP + diphosphate. It participates in siderophore biosynthesis; bacillibactin biosynthesis. Its function is as follows. Involved in the biosynthesis of the catecholic siderophore bacillibactin. Catalyzes the activation of the carboxylate group of 2,3-dihydroxy-benzoate (DHB), via ATP-dependent PPi exchange reactions, to the acyladenylate. The protein is 2,3-dihydroxybenzoate-AMP ligase of Bacillus subtilis (strain 168).